We begin with the raw amino-acid sequence, 488 residues long: ATP synthase subunit beta (488 aa).

164-171 (GGAGVGKT) lines the ATP pocket.

This sequence belongs to the ATPase alpha/beta chains family. In terms of assembly, F-type ATPases have 2 components, CF(1) - the catalytic core - and CF(0) - the membrane proton channel. CF(1) has five subunits: alpha(3), beta(3), gamma(1), delta(1), epsilon(1). CF(0) has four main subunits: a(1), b(1), b'(1) and c(9-12).

The protein resides in the cellular thylakoid membrane. The catalysed reaction is ATP + H2O + 4 H(+)(in) = ADP + phosphate + 5 H(+)(out). In terms of biological role, produces ATP from ADP in the presence of a proton gradient across the membrane. The catalytic sites are hosted primarily by the beta subunits. This chain is ATP synthase subunit beta, found in Prochlorococcus marinus (strain NATL2A).